Here is a 204-residue protein sequence, read N- to C-terminus: MKVGVLALQGDVEEHLEAFRRAAAELNISAEAVRVKRADQLDGLSALAIPGGESTTIGKLAQRLGILDRLRTVVESGVPTLATCAGAVLLAKEVRDSVVGPTGQPLLAVLNAAVVRNAYGRQRDSFEANVDVEGIGTVRAVFIRAPIFAKTWPPARAIAHVDHPRAGRAIVAVRQDHVLATAFHPELTTTAFHKAVLEMAAGRL.

52 to 54 (GES) contributes to the L-glutamine binding site. C84 (nucleophile) is an active-site residue. L-glutamine contacts are provided by residues R116 and 143–144 (IR). Catalysis depends on charge relay system residues H184 and E186.

This sequence belongs to the glutaminase PdxT/SNO family. In the presence of PdxS, forms a dodecamer of heterodimers. Only shows activity in the heterodimer.

It carries out the reaction aldehydo-D-ribose 5-phosphate + D-glyceraldehyde 3-phosphate + L-glutamine = pyridoxal 5'-phosphate + L-glutamate + phosphate + 3 H2O + H(+). The enzyme catalyses L-glutamine + H2O = L-glutamate + NH4(+). The protein operates within cofactor biosynthesis; pyridoxal 5'-phosphate biosynthesis. Functionally, catalyzes the hydrolysis of glutamine to glutamate and ammonia as part of the biosynthesis of pyridoxal 5'-phosphate. The resulting ammonia molecule is channeled to the active site of PdxS. The protein is Pyridoxal 5'-phosphate synthase subunit PdxT of Pyrobaculum arsenaticum (strain DSM 13514 / JCM 11321 / PZ6).